Consider the following 60-residue polypeptide: Metallothionein (60 aa).

The interval 1–28 (MDCACATGGSCSCAGSCKCENCKCTSCK) is beta. A divalent metal cation is bound by residues Cys-3, Cys-5, Cys-11, Cys-13, Cys-17, Cys-19, Cys-22, Cys-24, Cys-27, Cys-31, Cys-32, Cys-34, Cys-35, Cys-39, Cys-42, Cys-46, Cys-48, Cys-56, Cys-58, and Cys-59. Residues 29–60 (KSCCSCCPSECEKCGQGCVCKGGSSEKCSCCN) form an alpha region.

Belongs to the metallothionein superfamily. Type 1 family.

In terms of biological role, metallothioneins have a high content of cysteine residues that bind various heavy metals. The chain is Metallothionein (MT-A) from Ambystoma mexicanum (Axolotl).